Here is a 184-residue protein sequence, read N- to C-terminus: Interferon alpha-1 (184 aa).

The signal sequence occupies residues 1-23 (MALPVSLLMALVVLSCHSICSLG). 2 cysteine pairs are disulfide-bonded: Cys-24–Cys-122 and Cys-52–Cys-162.

This sequence belongs to the alpha/beta interferon family. As to quaternary structure, interacts with CR2.

Its subcellular location is the secreted. Produced by macrophages, IFN-alpha have antiviral activities. Interferon stimulates the production of two enzymes: a protein kinase and an oligoadenylate synthetase. The protein is Interferon alpha-1 of Equus caballus (Horse).